A 329-amino-acid polypeptide reads, in one-letter code: Isopentenyl-diphosphate delta-isomerase (329 aa).

4 to 5 lines the substrate pocket; the sequence is RK. Residues 59–61, Ser89, and Asn116 contribute to the FMN site; that span reads AMT. Gln146 contacts substrate. Residue Glu147 coordinates Mg(2+). Residues Lys178, Ser203, Thr208, 252-254, and 273-274 contribute to the FMN site; these read GVR and SR.

Belongs to the IPP isomerase type 2 family. Homooctamer. Dimer of tetramers. It depends on FMN as a cofactor. NADPH serves as cofactor. Requires Mg(2+) as cofactor.

It is found in the cytoplasm. It catalyses the reaction isopentenyl diphosphate = dimethylallyl diphosphate. Its function is as follows. Involved in the biosynthesis of isoprenoids. Catalyzes the 1,3-allylic rearrangement of the homoallylic substrate isopentenyl (IPP) to its allylic isomer, dimethylallyl diphosphate (DMAPP). In Streptococcus pyogenes serotype M28 (strain MGAS6180), this protein is Isopentenyl-diphosphate delta-isomerase.